The sequence spans 218 residues: Pyridoxine/pyridoxamine 5'-phosphate oxidase (218 aa).

Residues 12 to 15 (RLSY) and Arg70 contribute to the substrate site. Residues 65–70 (RTVLLR), 80–81 (YT), Lys87, and Gln109 contribute to the FMN site. Substrate-binding residues include Tyr127, Arg131, and Ser135. FMN contacts are provided by residues 145-146 (QS) and Trp191. 197–199 (RLH) provides a ligand contact to substrate. Residue Arg201 participates in FMN binding.

It belongs to the pyridoxamine 5'-phosphate oxidase family. As to quaternary structure, homodimer. Requires FMN as cofactor.

It catalyses the reaction pyridoxamine 5'-phosphate + O2 + H2O = pyridoxal 5'-phosphate + H2O2 + NH4(+). The enzyme catalyses pyridoxine 5'-phosphate + O2 = pyridoxal 5'-phosphate + H2O2. Its pathway is cofactor metabolism; pyridoxal 5'-phosphate salvage; pyridoxal 5'-phosphate from pyridoxamine 5'-phosphate: step 1/1. It functions in the pathway cofactor metabolism; pyridoxal 5'-phosphate salvage; pyridoxal 5'-phosphate from pyridoxine 5'-phosphate: step 1/1. Functionally, catalyzes the oxidation of either pyridoxine 5'-phosphate (PNP) or pyridoxamine 5'-phosphate (PMP) into pyridoxal 5'-phosphate (PLP). The sequence is that of Pyridoxine/pyridoxamine 5'-phosphate oxidase from Acinetobacter baumannii (strain SDF).